Consider the following 465-residue polypeptide: MSGFSLEKFNFVLLFPVLSLLFWAIVLLLLDAFKKLSRNFYIGASIIALFSTLCFLLIYNGFVLDNSHAFFDLFVSDNYAIFAQIVILVFSMLYLLMDKDEQKAEFFSLFLFMIASLILMISSTNLIVIFLALEGSSLALYTLIALRGTHNAISSSIKYFTLAAVGAGFFVFACAFVYLKTKSLDLDNLLHSEYISDPILLCAGVMFLVIVGVKLSIAPFHFWLKDVYYGVHTNFIAFISIVPKIAMIIVVLRIFSALGGGVKFEYIVALLAIFSMLAVSIVALIQKDVKKMLAYSSITHSSFILAVIVSSMSVSSQGDGTSYLLSIFALFVYWISFAFANYGIFLILSLFQKSSFESFSGLFDQRPVLSIMLAIFILCIAGIPPFGIFWGKILILASILNSGYYALVFAVALSSMIMLYAYLKILIYVFFKKAQIVESANLDVKQKIILCLCLIGSVSCVFLLL.

A run of 13 helical transmembrane segments spans residues Phe-9–Leu-29, Ala-44–Leu-64, Leu-73–Leu-93, Phe-110–Phe-130, Tyr-159–Leu-179, Pro-198–Ala-218, Phe-235–Phe-255, Glu-265–Ile-285, Met-292–Met-312, Ile-327–Ile-347, Ile-371–Gly-391, Tyr-405–Ile-427, and Val-444–Leu-464.

It belongs to the complex I subunit 2 family. NDH-1 is composed of 14 different subunits. Subunits NuoA, H, J, K, L, M, N constitute the membrane sector of the complex.

The protein resides in the cell inner membrane. It catalyses the reaction a quinone + NADH + 5 H(+)(in) = a quinol + NAD(+) + 4 H(+)(out). NDH-1 shuttles electrons from NADH, via FMN and iron-sulfur (Fe-S) centers, to quinones in the respiratory chain. The immediate electron acceptor for the enzyme in this species is believed to be ubiquinone. Couples the redox reaction to proton translocation (for every two electrons transferred, four hydrogen ions are translocated across the cytoplasmic membrane), and thus conserves the redox energy in a proton gradient. In Campylobacter lari (strain RM2100 / D67 / ATCC BAA-1060), this protein is NADH-quinone oxidoreductase subunit N.